A 585-amino-acid polypeptide reads, in one-letter code: MIRGVVDADVCLFAASTLLLLRGIIQARDAFAGLANDSIVSIALMMMIAAGLESSGALEFVPELVLGRSKREWVGQLRMHIAVASVSAVMNNTPLVAVMIPVVESWCRNNNHHPSRFMMPLSYSAILGGLCTIIGTSTNLIARGLAQQDDPKLKLPFVEVGIIGLPLTVAGGIYVVLFSPLLLRKRDTMMAAVVADPREYVVSVRVDARFAHIGRTIESAGLRHLRGLFLADLQRQDGATVPSPPPTTIILQGDKLTFAGDIQGMQHILSLPGLTPISSADLAADLEETVAGSPSSDRIMVEAVVSLSSPICNMTIRDSHFRSRYGAVVLRVHRNGERIAGGLGDIVVKGGDTMLLEAGPDFLQKYKHSTEWALAVDAFRVTLPRRDPLALFMSLGIFIALIVLNSMDVLPLSTTALVCLFAYLITGVLTVSQCRAAIPSSILLTVAGGFGVAKAMTVTGLAHRLAGSLLNVFSWMGRAGPVAAIYASTSLLTALLSNGAAVTLMYPIARDLAKQAGVSIKGPLYALMIGASSDFSTPIGYQTNLMVSGPGGYRFLDFTRFGLPLQFVAALITVPICVLYFEPRT.

Transmembrane regions (helical) follow at residues 5-25, 30-50, 83-103, 117-137, and 162-182; these read VVDA…RGII, AFAG…MIAA, VASV…IPVV, FMMP…IGTS, and IIGL…SPLL. 2 consecutive RCK C-terminal domains span residues 189–274 and 288–372; these read MMAA…LPGL and ETVA…STEW. 5 consecutive transmembrane segments (helical) span residues 389 to 409, 411 to 431, 442 to 462, 482 to 502, and 561 to 581; these read LALF…SMDV, PLST…VLTV, ILLT…TGLA, VAAI…GAAV, and FGLP…VLYF.

This sequence belongs to the CitM (TC 2.A.11) transporter family.

It localises to the membrane. Its function is as follows. Not known; mutations in SAC1 produces cells that cannot synthesize arylsulfatase and cannot take up sulfate as rapidly as wild-type cells. SAC1 is necessary for cells to survive sulfur deprivation. This is Putative sulfur deprivation response regulator (SAC1) from Chlamydomonas reinhardtii (Chlamydomonas smithii).